The sequence spans 245 residues: Sugar fermentation stimulation protein homolog (245 aa).

The protein belongs to the SfsA family.

The chain is Sugar fermentation stimulation protein homolog from Yersinia pestis bv. Antiqua (strain Nepal516).